The chain runs to 437 residues: MCAPLFQPAIIQSVLDLDVYKINMMQAAYRFYPQTQVRYELIVRSDDNLSDLVEEVREEINRLAELRFDAAQLAYLAEKAPYLTAEFLSYLETFRFHPQQQVSVGIFRTAQGDCQLRVTINGIWHETILYETLVMSIISELRNRRYWAQIPQSQLHKVLEDKLDFLDSELKRRNITNFRFSEMGTRRRFSFAAQKTMLDVLRARVPELLLGTSNYHLAQEFNLTPIGTVAHEWTMAHQALVAVQHSQCVALDKWLEAFNGSLGIALTDTIGIDAFLSDFDLEKATAYAGVRHDSGSPFVWGDKIIAHYESLGIDPSTKTLIFTDGLDFARALDICEYFAGRAQISFGIGTFLANDMGNWTNDKGIRYQPISMVVKMAECNGSPVAKISDEPEKAMCEDIFFLMNLKQRFGLEVDLDKAIETLKQMKRQQKKRIQSVA.

Residue His-231 is modified to Phosphohistidine; by autocatalysis.

It belongs to the NAPRTase family. Transiently phosphorylated on a His residue during the reaction cycle. Phosphorylation strongly increases the affinity for substrates and increases the rate of nicotinate D-ribonucleotide production. Dephosphorylation regenerates the low-affinity form of the enzyme, leading to product release.

It catalyses the reaction nicotinate + 5-phospho-alpha-D-ribose 1-diphosphate + ATP + H2O = nicotinate beta-D-ribonucleotide + ADP + phosphate + diphosphate. The protein operates within cofactor biosynthesis; NAD(+) biosynthesis; nicotinate D-ribonucleotide from nicotinate: step 1/1. Functionally, catalyzes the synthesis of beta-nicotinate D-ribonucleotide from nicotinate and 5-phospho-D-ribose 1-phosphate at the expense of ATP. The chain is Nicotinate phosphoribosyltransferase from Vibrio vulnificus (strain YJ016).